A 177-amino-acid chain; its full sequence is Ribulose bisphosphate carboxylase small subunit, chloroplastic 5 (177 aa).

A chloroplast-targeting transit peptide spans 1–56 (MASSMMASTAAVARAGPAQSSMVAPFNGLRSSVAFPATRKANNDLSTLPSNGGRVS).

The protein belongs to the RuBisCO small chain family. Heterohexadecamer of 8 large and 8 small subunits.

It is found in the plastid. Its subcellular location is the chloroplast. Functionally, ruBisCO catalyzes two reactions: the carboxylation of D-ribulose 1,5-bisphosphate, the primary event in carbon dioxide fixation, as well as the oxidative fragmentation of the pentose substrate. Both reactions occur simultaneously and in competition at the same active site. Although the small subunit is not catalytic it is essential for maximal activity. In Lemna gibba (Swollen duckweed), this protein is Ribulose bisphosphate carboxylase small subunit, chloroplastic 5.